The sequence spans 631 residues: Phosphomethylpyrimidine synthase (631 aa).

Substrate contacts are provided by residues Asn239, Met268, Tyr297, His333, 353–355 (SRG), 394–397 (DGLR), and Glu433. His437 contributes to the Zn(2+) binding site. Tyr460 is a binding site for substrate. His501 is a binding site for Zn(2+). Cys581, Cys584, and Cys589 together coordinate [4Fe-4S] cluster.

The protein belongs to the ThiC family. Homodimer. [4Fe-4S] cluster serves as cofactor.

The catalysed reaction is 5-amino-1-(5-phospho-beta-D-ribosyl)imidazole + S-adenosyl-L-methionine = 4-amino-2-methyl-5-(phosphooxymethyl)pyrimidine + CO + 5'-deoxyadenosine + formate + L-methionine + 3 H(+). The protein operates within cofactor biosynthesis; thiamine diphosphate biosynthesis. Its function is as follows. Catalyzes the synthesis of the hydroxymethylpyrimidine phosphate (HMP-P) moiety of thiamine from aminoimidazole ribotide (AIR) in a radical S-adenosyl-L-methionine (SAM)-dependent reaction. The sequence is that of Phosphomethylpyrimidine synthase from Salmonella dublin (strain CT_02021853).